A 159-amino-acid polypeptide reads, in one-letter code: Probable metallophosphoesterase MPN_126 (159 aa).

Positions 9, 11, 34, 53, 75, 107, and 109 each coordinate Mn(2+).

It belongs to the metallophosphoesterase superfamily. YfcE family. It depends on Mn(2+) as a cofactor.

The protein is Probable metallophosphoesterase MPN_126 of Mycoplasma pneumoniae (strain ATCC 29342 / M129 / Subtype 1) (Mycoplasmoides pneumoniae).